We begin with the raw amino-acid sequence, 167 residues long: Small ribosomal subunit protein uS5 (167 aa).

The S5 DRBM domain occupies 11 to 74 (LQEKLIAVNR…EKARRAMINV (64 aa)).

The protein belongs to the universal ribosomal protein uS5 family. As to quaternary structure, part of the 30S ribosomal subunit. Contacts proteins S4 and S8.

Its function is as follows. With S4 and S12 plays an important role in translational accuracy. Functionally, located at the back of the 30S subunit body where it stabilizes the conformation of the head with respect to the body. This is Small ribosomal subunit protein uS5 from Yersinia pseudotuberculosis serotype O:1b (strain IP 31758).